A 701-amino-acid polypeptide reads, in one-letter code: MIPAIPARPQRKKGDSAEDSPVPEVPQRPMRHSTTEEIADLVSNTTKELEEMEQLISHGHKGEEPVVPQRRPKVVKAKEHENKQVVDTPEMPSIPQRPRRKQTSESLESVSVADGQGSKATEEMTATDSPMEDKDTNMVENTADVSKAKESTELNVPGGTEETFTTEDPLPATTGSHPEAIKEISDELNEVVAGTEKPIEHTISNDKEETTLMKTSEQRDEEMKETKSNRASEKLSDNTSENETVKTSDFVAKTAEKTAEMVSPQESRDEIEKSVAKTDEETDDKQIEEQKIESIEESIPESIEVPMKKSTEEPEKEPVEDSSEILVKGQTEEPSEKSVSSSPDQSNDAPKTSTESANEIQRKSQEPTTETTSETSEKSTKDSTEPSEKVSQDRSDQNETADGEETKPHVPESRPKKRGPPPVPKKPSSRIAAFQEMLQKQQEAQFEKSQKKGEQNDGAMNSDARTKFANNLNGLFALPGMVPGGPPPPALAKVLKDPQDTANDKTSTSNDQDTGSGTNLKDVRHGRARGPRGRKLPTKVATTEKVKVSETGNTIEIFSAWKLSIKGQVVHDADDDIDCRDQDNYVETEEQNMEEQEEREMEKELMASESTVEEEETVEQEKTVEEEKPVKEELTVKEEQTKSAEPVLVNVPTGTSSDILDNEPTKTTLDVQEPSPEQKLDTEAREESGTLPTEAEPLDNE.

Disordered regions lie at residues 1 to 35 (MIPAIPARPQRKKGDSAEDSPVPEVPQRPMRHSTT), 53 to 177 (EQLI…TGSH), 203 to 546 (ISND…TEKV), and 589 to 701 (EEQN…LDNE). The span at 203–236 (ISNDKEETTLMKTSEQRDEEMKETKSNRASEKLS) shows a compositional bias: basic and acidic residues. The span at 237-247 (DNTSENETVKT) shows a compositional bias: polar residues. Basic and acidic residues-rich tracts occupy residues 266-294 (ESRDEIEKSVAKTDEETDDKQIEEQKIES) and 306-319 (PMKKSTEEPEKEPV). Positions 337 to 346 (KSVSSSPDQS) are enriched in low complexity. Residues 347–359 (NDAPKTSTESANE) show a composition bias toward polar residues. Basic and acidic residues-rich tracts occupy residues 375 to 397 (TSEKSTKDSTEPSEKVSQDRSDQ), 404 to 414 (EETKPHVPESR), 445 to 455 (QFEKSQKKGEQ), and 494 to 503 (VLKDPQDTAN). A compositionally biased stretch (polar residues) spans 504-519 (DKTSTSNDQDTGSGTN). A compositionally biased stretch (basic residues) spans 524–537 (RHGRARGPRGRKLP). Residues 589–599 (EEQNMEEQEER) are compositionally biased toward acidic residues. Basic and acidic residues predominate over residues 619–642 (EQEKTVEEEKPVKEELTVKEEQTK). A compositionally biased stretch (polar residues) spans 652 to 670 (PTGTSSDILDNEPTKTTLD). The segment covering 676–688 (PEQKLDTEAREES) has biased composition (basic and acidic residues).

The protein belongs to the AIM21 family.

The protein resides in the cytoplasm. The protein localises to the cytoskeleton. Its subcellular location is the actin patch. Involved in mitochondrial migration along actin filaments. This is Altered inheritance of mitochondria protein 21 (AIM21) from Candida glabrata (strain ATCC 2001 / BCRC 20586 / JCM 3761 / NBRC 0622 / NRRL Y-65 / CBS 138) (Yeast).